The chain runs to 610 residues: UvrABC system protein C (610 aa).

The GIY-YIG domain occupies 16–94; that stretch reads SQPGVYRMYD…IQRYQPRYNV (79 aa). The 36-residue stretch at 204-239 folds into the UVR domain; it reads SQVIEGLIKRMEEASQALRFEEAARIRDQIHAVRQV.

It belongs to the UvrC family. In terms of assembly, interacts with UvrB in an incision complex.

It localises to the cytoplasm. Functionally, the UvrABC repair system catalyzes the recognition and processing of DNA lesions. UvrC both incises the 5' and 3' sides of the lesion. The N-terminal half is responsible for the 3' incision and the C-terminal half is responsible for the 5' incision. The protein is UvrABC system protein C of Proteus mirabilis (strain HI4320).